The following is a 1483-amino-acid chain: Cystic fibrosis transmembrane conductance regulator (1483 aa).

Residues 1–77 (MQRSPLEKAS…KLINALRRCF (77 aa)) lie on the Cytoplasmic side of the membrane. A helical membrane pass occupies residues 78 to 98 (FWKFMFYGILLYLGEVTKAVQ). Residues 81 to 365 (FMFYGILLYL…WAVQTWYDSL (285 aa)) enclose the ABC transmembrane type-1 1 domain. Residues 99 to 122 (PLLLGRIIASYDPDNKVERSIAIY) lie on the Extracellular side of the membrane. The helical transmembrane segment at 123–146 (LGIGLCLLFVVRTLLLHPAIFGLH) threads the bilayer. The Cytoplasmic segment spans residues 147–195 (HIGMQMRIAMFSLIYKKTLKLSSRVLDKISIGQLISLLSNNLNKFDEGL). A helical membrane pass occupies residues 196–216 (ALAHFVWIVPLQVTLLMGLLW). The Extracellular portion of the chain corresponds to 217-222 (ELLQAS). The helical transmembrane segment at 223-243 (AFCGLAFLIIVAFYQAGLGRM) threads the bilayer. The Cytoplasmic segment spans residues 244-298 (MMKYRDKRGGKINERLVITSEMIENIQSVKAYCWEEAMEKMIENLRQTELKLTRK). A helical membrane pass occupies residues 299–319 (AAYVRYCNSSAFFFSGFFVVF). At 320-339 (LSVLPYALMKGIILRKIFTT) the chain is on the extracellular side. The helical transmembrane segment at 340-358 (ISFCIVLRMAVTRQFPWAV) threads the bilayer. Residues 359-859 (QTWYDSLGAI…YLRYITIHKS (501 aa)) lie on the Cytoplasmic side of the membrane. Residues W401, S434, 458–465 (GSTGAGKT), and Q493 contribute to the ATP site. Residues 423–646 (NGDNSLFFSN…RPDFSSKLMG (224 aa)) enclose the ABC transporter 1 domain. The S-palmitoyl cysteine moiety is linked to residue C524. Phosphoserine is present on residues S549 and S660. Positions 654-832 (SAERRNSILT…EEINEEDLKE (179 aa)) are disordered R region. S670 is modified (phosphoserine; by PKA). Position 686 is a phosphoserine (S686). K688 participates in a covalent cross-link: Glycyl lysine isopeptide (Lys-Gly) (interchain with G-Cter in ubiquitin). Phosphoserine is present on residues S700 and S712. At T717 the chain carries Phosphothreonine. 5 positions are modified to phosphoserine: S737, S768, S791, S796, and S814. A helical membrane pass occupies residues 860–880 (LIFVLIWCLIIFLAEVAVSLV). One can recognise an ABC transmembrane type-1 2 domain in the interval 860–1157 (LIFVLIWCLI…AVNSSIDVDS (298 aa)). Residues 881-920 (FLLLFEKSPRQDTGNVTKSSNNSSYGVIITNTSSYYIIYI) are Extracellular-facing. N-linked (GlcNAc...) asparagine glycosylation is found at N895, N901, N902, and N911. The discontinuously helical transmembrane segment at 921 to 941 (YVGVADTLLALGLLRGLPLVH) threads the bilayer. Topologically, residues 942-992 (TLITASKILHHKMLHSVLQAPMSTLNTLKAGGILNRFSKDIAILDDLLPLT) are cytoplasmic. Residues 993 to 1013 (IFDFIQLILIVIGAVIVVSVL) form a helical membrane-spanning segment. The Extracellular portion of the chain corresponds to 1014–1015 (EP). The helical transmembrane segment at 1016-1036 (YIFLATVPVIIAFVMLRAYFL) threads the bilayer. At 1037–1097 (HTSQQLKQLE…TANWFLYLST (61 aa)) the chain is on the cytoplasmic side. Residues 1098 to 1118 (LRWFQMRIEMIFVIFFIAVTF) form a helical membrane-spanning segment. Topologically, residues 1119–1132 (ISILTTGDGEGRVG) are extracellular. A helical membrane pass occupies residues 1133 to 1153 (IILTLAMNIMNTLQWAVNSSI). The Cytoplasmic segment spans residues 1154 to 1483 (DVDSLMRSVS…TEEEVQETRL (330 aa)). The 234-residue stretch at 1213 to 1446 (MTVKDLTAKY…KSLFRQAISN (234 aa)) folds into the ABC transporter 2 domain. ATP is bound by residues Y1222 and 1247 to 1254 (GRTGSGKS). Residues 1389–1483 (RTIKQAFADC…TEEEVQETRL (95 aa)) are interaction with GORASP2. Residue C1398 is the site of S-palmitoyl cysteine attachment. S1447 and S1459 each carry phosphoserine. Positions 1455–1465 (HRNSSKHKSRS) are enriched in basic residues. Residues 1455 to 1483 (HRNSSKHKSRSKIAALKEETEEEVQETRL) form a disordered region. Acidic residues predominate over residues 1473–1483 (ETEEEVQETRL). Positions 1481 to 1483 (TRL) match the PDZ-binding motif.

Belongs to the ABC transporter superfamily. ABCC family. CFTR transporter (TC 3.A.1.202) subfamily. As to quaternary structure, monomer; does not require oligomerization for channel activity. May form oligomers in the membrane. Interacts with SLC26A3, SLC26A6 and NHERF1. Interacts with SHANK2. Interacts with MYO6. Interacts (via C-terminus) with GOPC (via PDZ domain); this promotes CFTR internalization and thereby decreases channel activity. Interacts with SLC4A7 through NHERF1. Found in a complex with MYO5B and RAB11A. Interacts with ANO1. Interacts with SLC26A8. Interacts with AHCYL1; the interaction increases CFTR activity. Interacts with CSE1L. The core-glycosylated form interacts with GORASP2 (via PDZ GRASP-type 1 domain) in respone to ER stress. Interacts with MARCHF2; the interaction leads to CFTR ubiqtuitination and degradation. Interacts with ADGRG2. N-glycosylated. In terms of processing, phosphorylated; cAMP treatment promotes phosphorylation and activates the channel. Dephosphorylation decreases the ATPase activity (in vitro). Phosphorylation at PKA sites activates the channel. Phosphorylation at PKC sites enhances the response to phosphorylation by PKA. Phosphorylated by AMPK; this inhibits channel activity. Post-translationally, ubiquitinated, leading to its degradation in the lysosome. Deubiquitination by USP10 in early endosomes enhances its endocytic recycling to the cell membrane. Ubiquitinated by RNF185 during ER stress. Ubiquitinated by MARCHF2.

Its subcellular location is the apical cell membrane. It is found in the early endosome membrane. The protein localises to the cell membrane. The protein resides in the recycling endosome membrane. It localises to the endoplasmic reticulum membrane. Its subcellular location is the nucleus. It carries out the reaction ATP + H2O + closed Cl(-) channel = ADP + phosphate + open Cl(-) channel.. The catalysed reaction is chloride(in) = chloride(out). The enzyme catalyses hydrogencarbonate(in) = hydrogencarbonate(out). It catalyses the reaction ATP + H2O = ADP + phosphate + H(+). Its function is as follows. Epithelial ion channel that plays an important role in the regulation of epithelial ion and water transport and fluid homeostasis. Mediates the transport of chloride ions across the cell membrane. The ion channel is also permeable to HCO(3)(-); selectivity depends on the extracellular chloride concentration. Exerts its function also by modulating the activity of other ion channels and transporters. Contributes to the regulation of the pH and the ion content of the epithelial fluid layer. Modulates the activity of the epithelial sodium channel (ENaC) complex, in part by regulating the cell surface expression of the ENaC complex. May regulate bicarbonate secretion and salvage in epithelial cells by regulating the transporter SLC4A7. Can inhibit the chloride channel activity of ANO1. Plays a role in the chloride and bicarbonate homeostasis during sperm epididymal maturation and capacitation. This Atelerix albiventris (Middle-African hedgehog) protein is Cystic fibrosis transmembrane conductance regulator.